Reading from the N-terminus, the 241-residue chain is Large ribosomal subunit protein uL2 (241 aa).

Residues Ala200–Arg241 are disordered.

It belongs to the universal ribosomal protein uL2 family. As to quaternary structure, part of the 50S ribosomal subunit. Forms a bridge to the 30S subunit in the 70S ribosome.

Functionally, one of the primary rRNA binding proteins. Required for association of the 30S and 50S subunits to form the 70S ribosome, for tRNA binding and peptide bond formation. It has been suggested to have peptidyltransferase activity; this is somewhat controversial. Makes several contacts with the 16S rRNA in the 70S ribosome. The polypeptide is Large ribosomal subunit protein uL2 (Methanosphaera stadtmanae (strain ATCC 43021 / DSM 3091 / JCM 11832 / MCB-3)).